Reading from the N-terminus, the 181-residue chain is TATA-box-binding protein C (181 aa).

A run of 2 repeats spans residues 5 to 83 (IANI…LGML) and 99 to 177 (VENV…QSKV).

Belongs to the TBP family.

General factor that plays a role in the activation of archaeal genes transcribed by RNA polymerase. Binds specifically to the TATA box promoter element which lies close to the position of transcription initiation. This chain is TATA-box-binding protein C (tbpC1), found in Halobacterium salinarum (strain ATCC 700922 / JCM 11081 / NRC-1) (Halobacterium halobium).